We begin with the raw amino-acid sequence, 428 residues long: UDP-N-acetylglucosamine 1-carboxyvinyltransferase 2 (428 aa).

Position 22 to 23 (22 to 23) interacts with phosphoenolpyruvate; the sequence is KN. Arg-92 is a binding site for UDP-N-acetyl-alpha-D-glucosamine. Cys-116 serves as the catalytic Proton donor. 2-(S-cysteinyl)pyruvic acid O-phosphothioketal is present on Cys-116. UDP-N-acetyl-alpha-D-glucosamine contacts are provided by residues 121 to 125, Asp-304, and Ile-326; that span reads RPIDQ.

The protein belongs to the EPSP synthase family. MurA subfamily.

Its subcellular location is the cytoplasm. It carries out the reaction phosphoenolpyruvate + UDP-N-acetyl-alpha-D-glucosamine = UDP-N-acetyl-3-O-(1-carboxyvinyl)-alpha-D-glucosamine + phosphate. Its pathway is cell wall biogenesis; peptidoglycan biosynthesis. Functionally, cell wall formation. Adds enolpyruvyl to UDP-N-acetylglucosamine. This Geobacillus kaustophilus (strain HTA426) protein is UDP-N-acetylglucosamine 1-carboxyvinyltransferase 2.